Reading from the N-terminus, the 412-residue chain is Putative odorant receptor 85d (412 aa).

The Cytoplasmic segment spans residues 1–56 (MLTKKDTQSAKEQEKLKAIPLHSFLKYANVFYLSIGMMAYDHKYSQKWKEVLLHWT). The chain crosses the membrane as a helical span at residues 57–77 (FIAQMVNLNTVLISELIYVFL). Over 78-84 (AIGKGSN) the chain is Extracellular. Residues 85 to 105 (FLEATMNLSFIGFVIVGDFKI) form a helical membrane-spanning segment. The Cytoplasmic segment spans residues 106–152 (WNISRQRKRLTQVVSRLEELHPQGLAQQEPYNIGHHLSGYSRYSKFY). Residues 153-173 (FGMHMVLIWTYNLYWAVYYLV) form a helical membrane-spanning segment. Residues 174-219 (CDFWLGMRQFERMLPYYCWVPWDWSTGYSYYFMYISQNIGGQACLS) are Extracellular-facing. Residues 220 to 240 (GQLAADMLMCALVTLVVMHFI) traverse the membrane as a helical segment. Topologically, residues 241–282 (RLSAHIESHVAGIGSFQHDLEFLQATVAYHQSLIHLCQDINE) are cytoplasmic. A helical transmembrane segment spans residues 283–303 (IFGVSLLSNFVSSSFIICFVG). Residues 304–314 (FQMTIGSKIDN) are Extracellular-facing. The chain crosses the membrane as a helical span at residues 315–335 (LVMLVLFLFCAMVQVFMIATH). The Cytoplasmic portion of the chain corresponds to 336-382 (AQRLVDASEQIGQAVYNHDWFRADLRYRKMLILIIKRAQQPSRLKAT). The helical transmembrane segment at 383–403 (MFLNISLVTVSDLLQLSYKFF) threads the bilayer. At 404–412 (ALLRTMYVN) the chain is on the extracellular side.

The protein belongs to the insect chemoreceptor superfamily. Heteromeric odorant receptor channel (TC 1.A.69) family. Or49a subfamily. In terms of assembly, interacts with Orco. Complexes exist early in the endomembrane system in olfactory sensory neurons (OSNs), coupling these complexes to the conserved ciliary trafficking pathway. Expressed in olfactory sensory neurons in the maxillary palp.

Its subcellular location is the cell membrane. Functionally, odorant receptor which mediates acceptance or avoidance behavior, depending on its substrates. The odorant receptor repertoire encodes a large collection of odor stimuli that vary widely in identity, intensity, and duration. May form a complex with Orco to form odorant-sensing units, providing sensitive and prolonged odorant signaling and calcium permeability. The sequence is that of Putative odorant receptor 85d (Or85d) from Drosophila melanogaster (Fruit fly).